Reading from the N-terminus, the 677-residue chain is mRNA export factor Gle1 (677 aa).

Positions 34–48 (EDREPIWVEGSRKTP) are enriched in basic and acidic residues. Disordered regions lie at residues 34 to 65 (EDREPIWVEGSRKTPEPPLPEESPAPEPNNEI), 113 to 136 (KQDAMRLSRETQQRKEERQRDQLQ), and 294 to 366 (ERQR…ATST). The span at 49 to 60 (EPPLPEESPAPE) shows a compositional bias: pro residues. Coiled-coil stretches lie at residues 122–179 (ETQQ…QKLH) and 280–346 (QQQL…AANV). Over residues 294 to 340 (ERQRQQQQEEERQKLEEQQKLEEQEKLRKEKEESAAKEKQQEAETAK) the composition is skewed to basic and acidic residues.

This sequence belongs to the GLE1 family. As to quaternary structure, may associate with the NPC.

It localises to the cytoplasm. The protein localises to the nucleus. The protein resides in the nuclear pore complex. Required for the export of mRNAs containing poly(A) tails from the nucleus into the cytoplasm. May be involved in the terminal step of the mRNA transport through the nuclear pore complex (NPC). The chain is mRNA export factor Gle1 from Drosophila melanogaster (Fruit fly).